We begin with the raw amino-acid sequence, 234 residues long: Toxic shock syndrome toxin-1 (234 aa).

An N-terminal signal peptide occupies residues 1-40 (MNKKLLMNFFIVSPLLLATTATDFTPVPLSSNQIIKTAKA).

Belongs to the staphylococcal/streptococcal toxin family.

The protein localises to the secreted. Responsible for the symptoms of toxic shock syndrome. The sequence is that of Toxic shock syndrome toxin-1 (tst) from Staphylococcus aureus.